A 308-amino-acid polypeptide reads, in one-letter code: Ribosomal RNA small subunit methyltransferase H (308 aa).

Residues 46–48 (AGH), Asp-63, Tyr-87, Asp-108, and Gln-115 contribute to the S-adenosyl-L-methionine site. The segment at 269 to 308 (TKRPVEASEEERGRNPRARSAKLRAAEKVAAPEGLPEVEV) is disordered. Positions 271–282 (RPVEASEEERGR) are enriched in basic and acidic residues.

The protein belongs to the methyltransferase superfamily. RsmH family.

It localises to the cytoplasm. It catalyses the reaction cytidine(1402) in 16S rRNA + S-adenosyl-L-methionine = N(4)-methylcytidine(1402) in 16S rRNA + S-adenosyl-L-homocysteine + H(+). Its function is as follows. Specifically methylates the N4 position of cytidine in position 1402 (C1402) of 16S rRNA. This Deinococcus geothermalis (strain DSM 11300 / CIP 105573 / AG-3a) protein is Ribosomal RNA small subunit methyltransferase H.